A 362-amino-acid chain; its full sequence is Phosphoserine aminotransferase (362 aa).

L-glutamate contacts are provided by Ser-9 and Arg-42. Pyridoxal 5'-phosphate is bound by residues 76–77 (GR), Trp-102, Thr-153, Asp-174, and Gln-197. At Lys-198 the chain carries N6-(pyridoxal phosphate)lysine. 239 to 240 (NT) serves as a coordination point for pyridoxal 5'-phosphate.

The protein belongs to the class-V pyridoxal-phosphate-dependent aminotransferase family. SerC subfamily. In terms of assembly, homodimer. Requires pyridoxal 5'-phosphate as cofactor.

The protein localises to the cytoplasm. It catalyses the reaction O-phospho-L-serine + 2-oxoglutarate = 3-phosphooxypyruvate + L-glutamate. The catalysed reaction is 4-(phosphooxy)-L-threonine + 2-oxoglutarate = (R)-3-hydroxy-2-oxo-4-phosphooxybutanoate + L-glutamate. The protein operates within amino-acid biosynthesis; L-serine biosynthesis; L-serine from 3-phospho-D-glycerate: step 2/3. Its pathway is cofactor biosynthesis; pyridoxine 5'-phosphate biosynthesis; pyridoxine 5'-phosphate from D-erythrose 4-phosphate: step 3/5. Functionally, catalyzes the reversible conversion of 3-phosphohydroxypyruvate to phosphoserine and of 3-hydroxy-2-oxo-4-phosphonooxybutanoate to phosphohydroxythreonine. The sequence is that of Phosphoserine aminotransferase from Escherichia coli O17:K52:H18 (strain UMN026 / ExPEC).